A 114-amino-acid chain; its full sequence is Ribonuclease P protein component (114 aa).

Belongs to the RnpA family. Consists of a catalytic RNA component (M1 or rnpB) and a protein subunit.

The enzyme catalyses Endonucleolytic cleavage of RNA, removing 5'-extranucleotides from tRNA precursor.. In terms of biological role, RNaseP catalyzes the removal of the 5'-leader sequence from pre-tRNA to produce the mature 5'-terminus. It can also cleave other RNA substrates such as 4.5S RNA. The protein component plays an auxiliary but essential role in vivo by binding to the 5'-leader sequence and broadening the substrate specificity of the ribozyme. This Limosilactobacillus fermentum (strain NBRC 3956 / LMG 18251) (Lactobacillus fermentum) protein is Ribonuclease P protein component.